A 372-amino-acid polypeptide reads, in one-letter code: 4-hydroxy-3-methylbut-2-en-1-yl diphosphate synthase (flavodoxin) (372 aa).

[4Fe-4S] cluster is bound by residues Cys270, Cys273, Cys305, and Glu312.

It belongs to the IspG family. The cofactor is [4Fe-4S] cluster.

The catalysed reaction is (2E)-4-hydroxy-3-methylbut-2-enyl diphosphate + oxidized [flavodoxin] + H2O + 2 H(+) = 2-C-methyl-D-erythritol 2,4-cyclic diphosphate + reduced [flavodoxin]. It participates in isoprenoid biosynthesis; isopentenyl diphosphate biosynthesis via DXP pathway; isopentenyl diphosphate from 1-deoxy-D-xylulose 5-phosphate: step 5/6. Its function is as follows. Converts 2C-methyl-D-erythritol 2,4-cyclodiphosphate (ME-2,4cPP) into 1-hydroxy-2-methyl-2-(E)-butenyl 4-diphosphate. The polypeptide is 4-hydroxy-3-methylbut-2-en-1-yl diphosphate synthase (flavodoxin) (Salmonella choleraesuis (strain SC-B67)).